Reading from the N-terminus, the 343-residue chain is Sulfate/thiosulfate import ATP-binding protein CysA (343 aa).

The ABC transporter domain occupies 3-237 (IRISHLRKQF…PASPFVYSFV (235 aa)). 35–42 (GPSGSGKT) serves as a coordination point for ATP.

Belongs to the ABC transporter superfamily. Sulfate/tungstate importer (TC 3.A.1.6) family. As to quaternary structure, the complex is composed of two ATP-binding proteins (CysA), two transmembrane proteins (CysT and CysW) and a solute-binding protein (CysP).

It is found in the cell inner membrane. The catalysed reaction is sulfate(out) + ATP + H2O = sulfate(in) + ADP + phosphate + H(+). It carries out the reaction thiosulfate(out) + ATP + H2O = thiosulfate(in) + ADP + phosphate + H(+). Part of the ABC transporter complex CysAWTP involved in sulfate/thiosulfate import. Responsible for energy coupling to the transport system. The sequence is that of Sulfate/thiosulfate import ATP-binding protein CysA from Xanthomonas campestris pv. campestris (strain ATCC 33913 / DSM 3586 / NCPPB 528 / LMG 568 / P 25).